Here is a 105-residue protein sequence, read N- to C-terminus: Histone H2A-like 1 (105 aa).

This sequence belongs to the histone H2A family. In terms of assembly, the nucleosome is a histone octamer containing two molecules each of H2A, H2B, H3 and H4 assembled in one H3-H4 heterotetramer and two H2A-H2B heterodimers. May be incorporated into a proportion of nucleosomes, replacing one or more H2A molecules. Interacts with H2BC1/TH2B; preferentially dimerizes with H2BC1/TH2B to form nucleosomes. In terms of tissue distribution, testis-specific.

It localises to the nucleus. The protein localises to the chromosome. Functionally, atypical histone H2A which can replace conventional H2A in some nucleosomes and may play a role during spermatogenesis. Nucleosomes wrap and compact DNA into chromatin, limiting DNA accessibility to the cellular machineries which require DNA as a template. Histones thereby play a central role in transcription regulation, DNA repair, DNA replication and chromosomal stability. DNA accessibility is regulated via a complex set of post-translational modifications of histones, also called histone code, and nucleosome remodeling. This Mus musculus (Mouse) protein is Histone H2A-like 1.